The following is a 376-amino-acid chain: Methylthioribose-1-phosphate isomerase (376 aa).

Asp256 serves as the catalytic Proton donor.

The protein belongs to the eIF-2B alpha/beta/delta subunits family. MtnA subfamily.

It is found in the cytoplasm. The protein resides in the nucleus. It catalyses the reaction 5-(methylsulfanyl)-alpha-D-ribose 1-phosphate = 5-(methylsulfanyl)-D-ribulose 1-phosphate. Its pathway is amino-acid biosynthesis; L-methionine biosynthesis via salvage pathway; L-methionine from S-methyl-5-thio-alpha-D-ribose 1-phosphate: step 1/6. Its function is as follows. Catalyzes the interconversion of methylthioribose-1-phosphate (MTR-1-P) into methylthioribulose-1-phosphate (MTRu-1-P). The sequence is that of Methylthioribose-1-phosphate isomerase from Vitis vinifera (Grape).